The chain runs to 173 residues: Small ribosomal subunit protein uS13 (173 aa).

Residues 130 to 143 show a composition bias toward basic residues; that stretch reads GVRHKRGQKVRGQR. Residues 130–155 form a disordered region; sequence GVRHKRGQKVRGQRTKSTGRTEGTIG.

The protein belongs to the universal ribosomal protein uS13 family. Part of the 30S ribosomal subunit. Forms a loose heterodimer with protein S19. Forms two bridges to the 50S subunit in the 70S ribosome.

Its function is as follows. Located at the top of the head of the 30S subunit, it contacts several helices of the 16S rRNA. In the 70S ribosome it contacts the 23S rRNA (bridge B1a) and protein L5 of the 50S subunit (bridge B1b), connecting the 2 subunits; these bridges are implicated in subunit movement. This Haloquadratum walsbyi (strain DSM 16790 / HBSQ001) protein is Small ribosomal subunit protein uS13.